Consider the following 478-residue polypeptide: MTLRIYDTAARQLRDFEPIREGHASIYLCGATVQSIPHIGHVRSGVAFDILRNWLEAKGLDVAFVRNVTDIDDKILTKAAENDRPWWEWAATHERAFNWAYDQLGVTPPSIEPRATGHVPQMIEYMQRIIDNGHGYAADGNVYAQPATIDNYGFLSGQKLDEMDQGESAGTGKRDPRDFTMWKAAKPGEPAWDTPWGRGRPGWHIECSAMATTYLGSEFDIHCGGLDLQFPHHENEAAQATAAGDGFARYWMHNGWVTMSGEKMSKSLGNVLSIPNVLKLVRPVELRYYLGSAHYRSMLEYSEAALGEAAAGYRRIEKFLVRAIEYVTGETAVDPQALPVGEMPAQFAEKMDDDLAVPQSLAVIHDVVREGNKLLDAKPTDEAKQQVKEIAGQVRAMAAVLGVDPLSEAWLESTKAAAGGSDVAMGALDVLVKAELERRAEARAAKDWATADEVRDRLAEAGIEVTDTADGAKWSLKG.

Cysteine 29 contributes to the Zn(2+) binding site. Residues 31-41 carry the 'HIGH' region motif; sequence ATVQSIPHIGH. 3 residues coordinate Zn(2+): cysteine 207, histidine 232, and glutamate 236. The 'KMSKS' region motif lies at 263-267; it reads KMSKS. Lysine 266 contacts ATP.

Belongs to the class-I aminoacyl-tRNA synthetase family. As to quaternary structure, monomer. Requires Zn(2+) as cofactor.

The protein localises to the cytoplasm. It catalyses the reaction tRNA(Cys) + L-cysteine + ATP = L-cysteinyl-tRNA(Cys) + AMP + diphosphate. The protein is Cysteine--tRNA ligase of Corynebacterium jeikeium (strain K411).